The following is a 352-amino-acid chain: Divinyl chlorophyll a/b light-harvesting protein PcbB (352 aa).

A run of 6 helical transmembrane segments spans residues 27 to 47 (FIAAHAAHAGLMMFWAGAFTL), 89 to 109 (CTVIAVLHLIFSGVLGAGGIL), 142 to 162 (FILGHHLIFLGLANIQFVEWA), 203 to 223 (VMGGHAFLAFFQIIGGAFHII), 243 to 263 (AVLSYSLAGVGYCALVAAFWS), and 307 to 327 (LANVHFYLGFFFIQGHLWHAL).

Belongs to the PsbB/PsbC family. IsiA/Pcb subfamily. The antenna complex consists of divinyl chlorophylls (a and b) and divinyl chlorophyll a/b binding proteins and binds more divinyl chlorophyll b than does the antenna complex from high-light-adapted Prochlorococcus. The cofactor is divinyl chlorophyll a. It depends on divinyl chlorophyll b as a cofactor.

The protein resides in the cellular thylakoid membrane. Its function is as follows. The antenna complex functions as a light receptor, it captures and delivers excitation energy to photosystems II and I. The Prochlorales pcb genes are not related to higher plant LHCs. In Prochlorococcus marinus (strain NATL2A), this protein is Divinyl chlorophyll a/b light-harvesting protein PcbB (pcbB).